The primary structure comprises 279 residues: Acetyl-coenzyme A carboxylase carboxyl transferase subunit beta (279 aa).

Residues 23 to 279 (LWWKCEECGA…LVTLFSMLKV (257 aa)) enclose the CoA carboxyltransferase N-terminal domain. Cys-27, Cys-30, Cys-46, and Cys-49 together coordinate Zn(2+). The C4-type zinc finger occupies 27–49 (CEECGAMLHKKQFEDHFFTCAEC).

Belongs to the AccD/PCCB family. As to quaternary structure, acetyl-CoA carboxylase is a heterohexamer composed of biotin carboxyl carrier protein (AccB), biotin carboxylase (AccC) and two subunits each of ACCase subunit alpha (AccA) and ACCase subunit beta (AccD). The cofactor is Zn(2+).

The protein resides in the cytoplasm. It catalyses the reaction N(6)-carboxybiotinyl-L-lysyl-[protein] + acetyl-CoA = N(6)-biotinyl-L-lysyl-[protein] + malonyl-CoA. It participates in lipid metabolism; malonyl-CoA biosynthesis; malonyl-CoA from acetyl-CoA: step 1/1. Functionally, component of the acetyl coenzyme A carboxylase (ACC) complex. Biotin carboxylase (BC) catalyzes the carboxylation of biotin on its carrier protein (BCCP) and then the CO(2) group is transferred by the transcarboxylase to acetyl-CoA to form malonyl-CoA. The polypeptide is Acetyl-coenzyme A carboxylase carboxyl transferase subunit beta (Pelodictyon phaeoclathratiforme (strain DSM 5477 / BU-1)).